Here is a 281-residue protein sequence, read N- to C-terminus: Imidazole glycerol phosphate synthase subunit HisF (281 aa).

Residues D12 and D131 contribute to the active site. The disordered stretch occupies residues 256 to 281 (VRQAEPLPQPAREGLGDSARRAMSSG).

Belongs to the HisA/HisF family. In terms of assembly, heterodimer of HisH and HisF.

Its subcellular location is the cytoplasm. It catalyses the reaction 5-[(5-phospho-1-deoxy-D-ribulos-1-ylimino)methylamino]-1-(5-phospho-beta-D-ribosyl)imidazole-4-carboxamide + L-glutamine = D-erythro-1-(imidazol-4-yl)glycerol 3-phosphate + 5-amino-1-(5-phospho-beta-D-ribosyl)imidazole-4-carboxamide + L-glutamate + H(+). Its pathway is amino-acid biosynthesis; L-histidine biosynthesis; L-histidine from 5-phospho-alpha-D-ribose 1-diphosphate: step 5/9. IGPS catalyzes the conversion of PRFAR and glutamine to IGP, AICAR and glutamate. The HisF subunit catalyzes the cyclization activity that produces IGP and AICAR from PRFAR using the ammonia provided by the HisH subunit. This Thermosynechococcus vestitus (strain NIES-2133 / IAM M-273 / BP-1) protein is Imidazole glycerol phosphate synthase subunit HisF.